A 302-amino-acid polypeptide reads, in one-letter code: Putative thiol protease R355 (302 aa).

Catalysis depends on residues His182 and Asp199. Cys244 serves as the catalytic Nucleophile.

Belongs to the peptidase C48 family.

Its subcellular location is the virion. The sequence is that of Putative thiol protease R355 from Acanthamoeba polyphaga mimivirus (APMV).